The sequence spans 404 residues: Formate-dependent phosphoribosylglycinamide formyltransferase (404 aa).

Residues 25-26 and Glu85 each bind N(1)-(5-phospho-beta-D-ribosyl)glycinamide; that span reads EL. ATP is bound by residues Arg118, Lys159, 164–169, 199–202, and Glu207; these read SSGKGQ and EGFV. One can recognise an ATP-grasp domain in the interval 123–318; sequence RLAAEELGLP…EFELHARAIL (196 aa). Mg(2+)-binding residues include Glu277 and Glu289. N(1)-(5-phospho-beta-D-ribosyl)glycinamide contacts are provided by residues Asp296, Lys365, and 372-373; that span reads RR.

This sequence belongs to the PurK/PurT family. In terms of assembly, homodimer.

The enzyme catalyses N(1)-(5-phospho-beta-D-ribosyl)glycinamide + formate + ATP = N(2)-formyl-N(1)-(5-phospho-beta-D-ribosyl)glycinamide + ADP + phosphate + H(+). Its pathway is purine metabolism; IMP biosynthesis via de novo pathway; N(2)-formyl-N(1)-(5-phospho-D-ribosyl)glycinamide from N(1)-(5-phospho-D-ribosyl)glycinamide (formate route): step 1/1. Functionally, involved in the de novo purine biosynthesis. Catalyzes the transfer of formate to 5-phospho-ribosyl-glycinamide (GAR), producing 5-phospho-ribosyl-N-formylglycinamide (FGAR). Formate is provided by PurU via hydrolysis of 10-formyl-tetrahydrofolate. This is Formate-dependent phosphoribosylglycinamide formyltransferase from Burkholderia cenocepacia (strain HI2424).